The primary structure comprises 129 residues: Ribosome-binding factor A (129 aa).

Belongs to the RbfA family. Monomer. Binds 30S ribosomal subunits, but not 50S ribosomal subunits or 70S ribosomes.

The protein resides in the cytoplasm. One of several proteins that assist in the late maturation steps of the functional core of the 30S ribosomal subunit. Associates with free 30S ribosomal subunits (but not with 30S subunits that are part of 70S ribosomes or polysomes). Required for efficient processing of 16S rRNA. May interact with the 5'-terminal helix region of 16S rRNA. This is Ribosome-binding factor A from Desulfosudis oleivorans (strain DSM 6200 / JCM 39069 / Hxd3) (Desulfococcus oleovorans).